An 84-amino-acid polypeptide reads, in one-letter code: Large ribosomal subunit protein bL27 (84 aa).

Belongs to the bacterial ribosomal protein bL27 family.

This chain is Large ribosomal subunit protein bL27, found in Salinispora tropica (strain ATCC BAA-916 / DSM 44818 / JCM 13857 / NBRC 105044 / CNB-440).